Consider the following 465-residue polypeptide: Argininosuccinate lyase (465 aa).

This sequence belongs to the lyase 1 family. Argininosuccinate lyase subfamily.

It localises to the cytoplasm. It catalyses the reaction 2-(N(omega)-L-arginino)succinate = fumarate + L-arginine. It functions in the pathway amino-acid biosynthesis; L-arginine biosynthesis; L-arginine from L-ornithine and carbamoyl phosphate: step 3/3. The protein is Argininosuccinate lyase of Hyphomonas neptunium (strain ATCC 15444).